The primary structure comprises 190 residues: Protein GrpE (190 aa).

A compositionally biased stretch (basic and acidic residues) spans 1–10 (MKKHVTEEQK). Positions 1-42 (MKKHVTEEQKTSAAPEAEQASPESSAAEAATPEERISRLEEQ) are disordered. A compositionally biased stretch (low complexity) spans 12 to 30 (SAAPEAEQASPESSAAEAA). The span at 32 to 42 (PEERISRLEEQ) shows a compositional bias: basic and acidic residues.

The protein belongs to the GrpE family. As to quaternary structure, homodimer.

It localises to the cytoplasm. Functionally, participates actively in the response to hyperosmotic and heat shock by preventing the aggregation of stress-denatured proteins, in association with DnaK and GrpE. It is the nucleotide exchange factor for DnaK and may function as a thermosensor. Unfolded proteins bind initially to DnaJ; upon interaction with the DnaJ-bound protein, DnaK hydrolyzes its bound ATP, resulting in the formation of a stable complex. GrpE releases ADP from DnaK; ATP binding to DnaK triggers the release of the substrate protein, thus completing the reaction cycle. Several rounds of ATP-dependent interactions between DnaJ, DnaK and GrpE are required for fully efficient folding. This chain is Protein GrpE, found in Pelobacter propionicus (strain DSM 2379 / NBRC 103807 / OttBd1).